The chain runs to 106 residues: 3-phenylpropionate/cinnamic acid dioxygenase ferredoxin subunit (106 aa).

One can recognise a Rieske domain in the interval 4–99; it reads IYACPVADVP…VHVEGGDIFI (96 aa). Residues Cys-42, His-44, Cys-62, and His-65 each contribute to the [2Fe-2S] cluster site.

The protein belongs to the bacterial ring-hydroxylating dioxygenase ferredoxin component family. As to quaternary structure, this dioxygenase system consists of four proteins: the two subunits of the hydroxylase component (HcaE and HcaF), a ferredoxin (HcaC) and a ferredoxin reductase (HcaD). Requires [2Fe-2S] cluster as cofactor.

It functions in the pathway aromatic compound metabolism; 3-phenylpropanoate degradation. In terms of biological role, part of the multicomponent 3-phenylpropionate dioxygenase, that converts 3-phenylpropionic acid (PP) and cinnamic acid (CI) into 3-phenylpropionate-dihydrodiol (PP-dihydrodiol) and cinnamic acid-dihydrodiol (CI-dihydrodiol), respectively. This protein seems to be a 2Fe-2S ferredoxin. This Shigella flexneri serotype 5b (strain 8401) protein is 3-phenylpropionate/cinnamic acid dioxygenase ferredoxin subunit.